Reading from the N-terminus, the 793-residue chain is Putative potassium transporter 8 (793 aa).

At 1 to 22 (MDLEFGRGMRSPQRDSWKTTLL) the chain is on the cytoplasmic side. Residues 23-43 (LAYQSLGVVYGDLSISPLYVF) traverse the membrane as a helical segment. Over 44-59 (KSTFAEDIQHSETNEE) the chain is Extracellular. Residues 60-80 (IFGVLSFVFWTLTLIPLIKYV) form a helical membrane-spanning segment. Over 81–151 (SIVLRADDNG…EKHKKLHTAL (71 aa)) the chain is Cytoplasmic. Residues 152–172 (LIMVLIGTCMVIGDGVLTPAI) form a helical membrane-spanning segment. Over 173-191 (SVFSAVSGLEFSLSKDHRE) the chain is Extracellular. The helical transmembrane segment at 192–212 (YAVIPITCVILAFLFALQHYG) threads the bilayer. At 213–215 (THR) the chain is on the cytoplasmic side. Residues 216–236 (VGFLFAPIVLAWLICMSALGL) form a helical membrane-spanning segment. The Extracellular segment spans residues 237-264 (YNIIHWNPHVYQALNPCYMFKFLKKTRK). Residues 265 to 285 (YGWMSLGGILLCMTGSEAMFA) form a helical membrane-spanning segment. The Cytoplasmic segment spans residues 286–292 (DLGHFSY). Residues 293–313 (SAIQLAFTSLVYPALILAYMG) traverse the membrane as a helical segment. At 314 to 343 (QAAYLSKHHDFYSNSQVGFYIAVPDKVRWP) the chain is on the extracellular side. A helical membrane pass occupies residues 344-364 (VLVLAILASVVGSQAIISGTF). The Cytoplasmic portion of the chain corresponds to 365-391 (SIINQSQSLSCFPRVKVVHTSDKIHGQ). The helical transmembrane segment at 392–412 (IYIPEINWLLMILCIAVTVGF) threads the bilayer. Residues 413–422 (RDTKHMGNAS) are Extracellular-facing. N420 carries N-linked (GlcNAc...) asparagine glycosylation. The chain crosses the membrane as a helical span at residues 423–443 (GLAVITVMLVTTCLTSLVIML). At 444–448 (CWRRP) the chain is on the cytoplasmic side. Residues 449–469 (PVLALCFLLFFGSVEALYFSA) form a helical membrane-spanning segment. The Extracellular segment spans residues 470 to 473 (SLIK). The chain crosses the membrane as a helical span at residues 474-494 (FLEGAWLPILLALFLMAVMLV). At 495 to 793 (WHYTTIKKYE…LLEVGMVYVL (299 aa)) the chain is on the cytoplasmic side. Residues 664 to 675 (DSVQHSSAASVE) show a composition bias toward polar residues. A disordered region spans residues 664-698 (DSVQHSSAASVETTTTRRRSGGGDDDGSPGGGGGR).

The protein belongs to the HAK/KUP transporter (TC 2.A.72.3) family.

The protein resides in the membrane. Its function is as follows. High-affinity potassium transporter. This Oryza sativa subsp. japonica (Rice) protein is Putative potassium transporter 8 (HAK8).